The chain runs to 282 residues: Elongation factor Ts (282 aa).

Residues 80–83 (TDFV) are involved in Mg(2+) ion dislocation from EF-Tu.

The protein belongs to the EF-Ts family.

It is found in the cytoplasm. Its function is as follows. Associates with the EF-Tu.GDP complex and induces the exchange of GDP to GTP. It remains bound to the aminoacyl-tRNA.EF-Tu.GTP complex up to the GTP hydrolysis stage on the ribosome. The polypeptide is Elongation factor Ts (Protochlamydia amoebophila (strain UWE25)).